A 196-amino-acid polypeptide reads, in one-letter code: Ribosome maturation factor RimP (196 aa).

It belongs to the RimP family.

The protein localises to the cytoplasm. Its function is as follows. Required for maturation of 30S ribosomal subunits. In Lawsonia intracellularis (strain PHE/MN1-00), this protein is Ribosome maturation factor RimP.